Reading from the N-terminus, the 98-residue chain is Small ribosomal subunit protein bS6 (98 aa).

Belongs to the bacterial ribosomal protein bS6 family.

Its function is as follows. Binds together with bS18 to 16S ribosomal RNA. In Staphylococcus aureus (strain NCTC 8325 / PS 47), this protein is Small ribosomal subunit protein bS6.